The chain runs to 169 residues: MPRSQRNDNFIDKTFTVVADILLRVIPTTRREKEAFSYYRDGMSAQSEGEYAEALQNYYEAMRLEIDPYDRSYILYNIGLIHTSNGQHTKALEYYLQALERNPALPQAFNNMAVICHYRGEQAIQQGDPENAEAWFDQAADYWKQGIALAPSNYIEAQNWLKITGRLKA.

TPR repeat units lie at residues 35–68 (AFSYYRDGMSAQSEGEYAEALQNYYEAMRLEIDP), 72–105 (SYILYNIGLIHTSNGQHTKALEYYLQALERNPAL), and 120–153 (GEQAIQQGDPENAEAWFDQAADYWKQGIALAPSN).

It belongs to the Ycf3 family.

It localises to the plastid. Its subcellular location is the chloroplast thylakoid membrane. Essential for the assembly of the photosystem I (PSI) complex. May act as a chaperone-like factor to guide the assembly of the PSI subunits. The sequence is that of Photosystem I assembly protein Ycf3 from Chaetosphaeridium globosum (Charophycean green alga).